The primary structure comprises 653 residues: Sodium-dependent nutrient amino acid transporter 1 (653 aa).

Residues 1-55 form a disordered region; sequence MELKGVHQQNGTSNGTGAAGTEGESPPPAPAPATAEAAASLETTTEKVDAEQQKT. Topologically, residues 1 to 59 are cytoplasmic; it reads MELKGVHQQNGTSNGTGAAGTEGESPPPAPAPATAEAAASLETTTEKVDAEQQKTERTN. 2 stretches are compositionally biased toward low complexity: residues 10-24 and 32-43; these read NGTS…TEGE and PATAEAAASLET. A compositionally biased stretch (basic and acidic residues) spans 44-55; the sequence is TTEKVDAEQQKT. The next 4 helical transmembrane spans lie at 60 to 80, 93 to 113, 125 to 145, and 146 to 166; these read WGNG…LGNV, GAFL…MYYL, TVKI…QAFA, and TICI…YLFV. Asn-202 and Asn-205 each carry an N-linked (GlcNAc...) asparagine glycan. 9 helical membrane passes run 241-261, 270-290, 319-339, 353-373, 413-433, 459-479, 486-506, 528-548, and 565-585; these read PDWK…LVIM, AAYF…VRAV, AVVQ…MFAS, IVTT…FAIL, LFSV…IVAL, ICGF…ILTL, TYVV…IYGM, CWSF…MVTI, and AGWL…MWYI.

The protein belongs to the sodium:neurotransmitter symporter (SNF) (TC 2.A.22) family.

The protein localises to the membrane. Unusual broad substrate spectrum amino acid:sodium cotransporter that promotes absorption of the D isomers of essential amino acids. Neutral amino acids are the preferred substrates, especially methionine and phenylalanine. The polypeptide is Sodium-dependent nutrient amino acid transporter 1 (Drosophila pseudoobscura pseudoobscura (Fruit fly)).